We begin with the raw amino-acid sequence, 323 residues long: Beta-ketoacyl-[acyl-carrier-protein] synthase III (323 aa).

Active-site residues include Cys-112 and His-249. Residues 250-254 form an ACP-binding region; sequence QANYR. Residue Asn-279 is part of the active site.

This sequence belongs to the thiolase-like superfamily. FabH family. As to quaternary structure, homodimer.

Its subcellular location is the cytoplasm. The enzyme catalyses malonyl-[ACP] + acetyl-CoA + H(+) = 3-oxobutanoyl-[ACP] + CO2 + CoA. Its pathway is lipid metabolism; fatty acid biosynthesis. In terms of biological role, catalyzes the condensation reaction of fatty acid synthesis by the addition to an acyl acceptor of two carbons from malonyl-ACP. Catalyzes the first condensation reaction which initiates fatty acid synthesis and may therefore play a role in governing the total rate of fatty acid production. Possesses both acetoacetyl-ACP synthase and acetyl transacylase activities. Its substrate specificity determines the biosynthesis of branched-chain and/or straight-chain of fatty acids. This Clostridium kluyveri (strain NBRC 12016) protein is Beta-ketoacyl-[acyl-carrier-protein] synthase III.